The following is an 850-amino-acid chain: Envelope glycoprotein gp160 (850 aa).

The N-terminal stretch at 1–28 is a signal peptide; the sequence is METQTSWLSLWRWGLMIFGMLMICSARE. The Extracellular segment spans residues 29–678; that stretch reads NLWVTVYYGV…ISNWLWYIKI (650 aa). The cysteines at positions 50 and 70 are disulfide-linked. Residues Asn84, Asn126, Asn133, Asn134, Asn139, Asn152, Asn156, Asn184, Asn193, Asn226, Asn230, Asn237, Asn258, Asn272, Asn285, Asn297, Asn327, Asn334, and Asn349 are each glycosylated (N-linked (GlcNAc...) asparagine; by host). 5 cysteine pairs are disulfide-bonded: Cys115–Cys201, Cys122–Cys192, Cys127–Cys153, Cys214–Cys243, and Cys224–Cys235. Residues 127–152 form a V1 region; that stretch reads CSDVNSNNSTDSNSSASNNSPEIMKN. Positions 153–192 are V2; that stretch reads CSFNVTTEIRNKRKQEYALFYRQDVVPINSDNKSYILINC. Positions 292 to 325 are V3; sequence CTRPNNNTRKGIHMGPGQVLYATGEIIGDIRKAY. Cys292 and Cys326 are disulfide-bonded. The tract at residues 357 to 367 is CD4-binding loop; the sequence is PSGGDIEITTH. Disulfide bonds link Cys371-Cys436 and Cys378-Cys409. Residues 378–409 are V4; it reads CNTSTLFNSSWDENNIKDTNSTNDNTTITIPC. N-linked (GlcNAc...) asparagine; by host glycosylation is found at Asn379, Asn385, Asn397, Asn402, Asn433, Asn439, Asn453, and Asn457. The interval 447 to 467 is disordered; sequence RDGGNRNGSENGTETFRPTGG. Polar residues predominate over residues 453–462; it reads NGSENGTETF. V5 regions lie at residues 453–465 and 454–465; these read NGSE…FRPT and GSENGTETFRPT. The fusion peptide stretch occupies residues 506–526; the sequence is AVGIGAVFLGFLGTAGSTMGA. An immunosuppression region spans residues 568–586; that stretch reads KQLQARVLAVERYLKDQQL. A disulfide bridge connects residues Cys592 and Cys598. N-linked (GlcNAc...) asparagine; by host glycans are attached at residues Asn605, Asn610, Asn619, Asn631, and Asn668. Residues 627-661 adopt a coiled-coil conformation; it reads REINNYTGIIYSLIEEAQNQQETNEKDLLALDKWT. An MPER; binding to GalCer region spans residues 656–677; it reads ALDKWTNLWNWFNISNWLWYIK. A helical transmembrane segment spans residues 679–699; that stretch reads FIMIIGGLIGLRIIFAVLAIV. Over 700–850 the chain is Cytoplasmic; that stretch reads NRVRQGYSPL…IRQGLERALL (151 aa). Residues 706–709 carry the YXXL motif; contains endocytosis signal motif; it reads YSPL. Residue Cys758 is the site of S-palmitoyl cysteine; by host attachment. Residues 849–850 carry the Di-leucine internalization motif motif; it reads LL.

The protein belongs to the HIV-1 env protein family. As to quaternary structure, the mature envelope protein (Env) consists of a homotrimer of non-covalently associated gp120-gp41 heterodimers. The resulting complex protrudes from the virus surface as a spike. There seems to be as few as 10 spikes on the average virion. Interacts with host CD4, CCR5 and CXCR4. Gp120 also interacts with the C-type lectins CD209/DC-SIGN and CLEC4M/DC-SIGNR (collectively referred to as DC-SIGN(R)). Gp120 and gp41 interact with GalCer. Gp120 interacts with host ITGA4/ITGB7 complex; on CD4+ T-cells, this interaction results in rapid activation of integrin ITGAL/LFA-1, which facilitates efficient cell-to-cell spreading of HIV-1. Gp120 interacts with cell-associated heparan sulfate; this interaction increases virus infectivity on permissive cells and may be involved in infection of CD4- cells. In terms of assembly, the mature envelope protein (Env) consists of a homotrimer of non-covalently associated gp120-gp41 heterodimers. The resulting complex protrudes from the virus surface as a spike. There seems to be as few as 10 spikes on the average virion. In terms of processing, highly glycosylated by host. The high number of glycan on the protein is reffered to as 'glycan shield' because it contributes to hide protein sequence from adaptive immune system. Post-translationally, palmitoylation of the transmembrane protein and of Env polyprotein (prior to its proteolytic cleavage) is essential for their association with host cell membrane lipid rafts. Palmitoylation is therefore required for envelope trafficking to classical lipid rafts, but not for viral replication. Specific enzymatic cleavages in vivo yield mature proteins. Envelope glycoproteins are synthesized as an inactive precursor that is heavily N-glycosylated and processed likely by host cell furin in the Golgi to yield the mature SU and TM proteins. The cleavage site between SU and TM requires the minimal sequence [KR]-X-[KR]-R. About 2 of the 9 disulfide bonds of gp41 are reduced by P4HB/PDI, following binding to CD4 receptor.

Its subcellular location is the virion membrane. The protein resides in the host cell membrane. It is found in the host endosome membrane. Functionally, oligomerizes in the host endoplasmic reticulum into predominantly trimers. In a second time, gp160 transits in the host Golgi, where glycosylation is completed. The precursor is then proteolytically cleaved in the trans-Golgi and thereby activated by cellular furin or furin-like proteases to produce gp120 and gp41. Attaches the virus to the host lymphoid cell by binding to the primary receptor CD4. This interaction induces a structural rearrangement creating a high affinity binding site for a chemokine coreceptor like CXCR4 and/or CCR5. Acts as a ligand for CD209/DC-SIGN and CLEC4M/DC-SIGNR, which are respectively found on dendritic cells (DCs), and on endothelial cells of liver sinusoids and lymph node sinuses. These interactions allow capture of viral particles at mucosal surfaces by these cells and subsequent transmission to permissive cells. HIV subverts the migration properties of dendritic cells to gain access to CD4+ T-cells in lymph nodes. Virus transmission to permissive T-cells occurs either in trans (without DCs infection, through viral capture and transmission), or in cis (following DCs productive infection, through the usual CD4-gp120 interaction), thereby inducing a robust infection. In trans infection, bound virions remain infectious over days and it is proposed that they are not degraded, but protected in non-lysosomal acidic organelles within the DCs close to the cell membrane thus contributing to the viral infectious potential during DCs' migration from the periphery to the lymphoid tissues. On arrival at lymphoid tissues, intact virions recycle back to DCs' cell surface allowing virus transmission to CD4+ T-cells. In terms of biological role, acts as a class I viral fusion protein. Under the current model, the protein has at least 3 conformational states: pre-fusion native state, pre-hairpin intermediate state, and post-fusion hairpin state. During fusion of viral and target intracellular membranes, the coiled coil regions (heptad repeats) assume a trimer-of-hairpins structure, positioning the fusion peptide in close proximity to the C-terminal region of the ectodomain. The formation of this structure appears to drive apposition and subsequent fusion of viral and target cell membranes. Complete fusion occurs in host cell endosomes and is dynamin-dependent, however some lipid transfer might occur at the plasma membrane. The virus undergoes clathrin-dependent internalization long before endosomal fusion, thus minimizing the surface exposure of conserved viral epitopes during fusion and reducing the efficacy of inhibitors targeting these epitopes. Membranes fusion leads to delivery of the nucleocapsid into the cytoplasm. This chain is Envelope glycoprotein gp160, found in Human immunodeficiency virus type 1 group M subtype J (isolate SE9173) (HIV-1).